The sequence spans 216 residues: Probable glutamine ABC transporter permease protein GlnM (216 aa).

One can recognise an ABC transmembrane type-1 domain in the interval phenylalanine 17–valine 205. Transmembrane regions (helical) follow at residues leucine 21 to methionine 41, isoleucine 63 to leucine 83, glycine 85 to isoleucine 105, leucine 132 to leucine 152, and leucine 181 to leucine 201.

The protein belongs to the binding-protein-dependent transport system permease family. The complex is composed of two ATP-binding proteins (GlnQ), two transmembrane proteins (GlnM and GlnP) and a solute-binding protein (GlnH).

The protein resides in the cell membrane. Its function is as follows. Part of the ABC transporter complex GlnHMPQ involved in glutamine transport. Probably responsible for the translocation of the substrate across the membrane. The sequence is that of Probable glutamine ABC transporter permease protein GlnM (glnM) from Bacillus subtilis (strain 168).